Consider the following 516-residue polypeptide: GTPase Obg (516 aa).

The 158-residue stretch at 4 to 161 folds into the Obg domain; the sequence is PTFVDRVTLH…LEIVLELKVV (158 aa). In terms of domain architecture, OBG-type G spans 162 to 332; it reads ADIGLVGFPS…LTFAMAGIVE (171 aa). GTP is bound by residues 168–175, 193–197, 214–217, 284–287, and 313–315; these read GFPSAGKS, FTTLV, DVPG, NKVD, and SAA. Residues S175 and T195 each contribute to the Mg(2+) site. The region spanning 351 to 432 is the OCT domain; that stretch reads PSVDGSDAFT…ENAVVFDFKP (82 aa). Positions 466 to 491 are enriched in basic and acidic residues; sequence AMADRAEGETRADVARRLDRPAREDG. A disordered region spans residues 466–516; the sequence is AMADRAEGETRADVARRLDRPAREDGGAYGPQSYEIGGRDDPDWAEEDLGE.

The protein belongs to the TRAFAC class OBG-HflX-like GTPase superfamily. OBG GTPase family. Monomer. Mg(2+) serves as cofactor.

The protein resides in the cytoplasm. In terms of biological role, an essential GTPase which binds GTP, GDP and possibly (p)ppGpp with moderate affinity, with high nucleotide exchange rates and a fairly low GTP hydrolysis rate. Plays a role in control of the cell cycle, stress response, ribosome biogenesis and in those bacteria that undergo differentiation, in morphogenesis control. The protein is GTPase Obg of Nocardioides sp. (strain ATCC BAA-499 / JS614).